The chain runs to 64 residues: Hypoxia-inducible lipid droplet-associated protein (64 aa).

The tract at residues 1–37 is required for targeting to lipid droplets; sequence MKFMLNLYVLGIMLTLLSIFVRVMESLGGLLESPLPG. The helical transmembrane segment at 7–24 threads the bilayer; that stretch reads LYVLGIMLTLLSIFVRVM. Positions 42–51 are enriched in polar residues; that stretch reads TRGQLANTQP. The segment at 42-64 is disordered; that stretch reads TRGQLANTQPPKGLPDHPSRGVQ. Positions 55–64 are enriched in basic and acidic residues; the sequence is LPDHPSRGVQ.

The protein resides in the lipid droplet. It is found in the secreted. It localises to the membrane. Increases intracellular lipid accumulation. Stimulates expression of cytokines including IL6, MIF and VEGFA. Enhances cell growth and proliferation. This is Hypoxia-inducible lipid droplet-associated protein (Hilpda) from Mus musculus (Mouse).